A 617-amino-acid polypeptide reads, in one-letter code: RNA polymerase sigma factor RpoD (617 aa).

The segment at 170–220 (PDDGSLPAEEVEPVNLKDDSADSKEKDDEEEESDDSSDSDDEGDGGPDPEE) is disordered. Residues 184–195 (NLKDDSADSKEK) are compositionally biased toward basic and acidic residues. The span at 196–218 (DDEEEESDDSSDSDDEGDGGPDP) shows a compositional bias: acidic residues. Residues 383–453 (MVEANLRLVI…TRSIADQART (71 aa)) form a sigma-70 factor domain-2 region. Positions 407–410 (DLIQ) match the Interaction with polymerase core subunit RpoC motif. Residues 462-538 (ETINKLNRIS…DSTMQSPIEM (77 aa)) are sigma-70 factor domain-3. The segment at 551-604 (VLAGLTAREAKVLRMRFGIDMNTDHTLEEVGKQFDVTRERIRQIEAKALRKLRH) is sigma-70 factor domain-4. Positions 577-596 (LEEVGKQFDVTRERIRQIEA) form a DNA-binding region, H-T-H motif.

Belongs to the sigma-70 factor family. RpoD/SigA subfamily. Interacts transiently with the RNA polymerase catalytic core.

The protein resides in the cytoplasm. In terms of biological role, sigma factors are initiation factors that promote the attachment of RNA polymerase to specific initiation sites and are then released. This sigma factor is the primary sigma factor during exponential growth. This is RNA polymerase sigma factor RpoD from Pseudomonas aeruginosa (strain ATCC 15692 / DSM 22644 / CIP 104116 / JCM 14847 / LMG 12228 / 1C / PRS 101 / PAO1).